Here is a 509-residue protein sequence, read N- to C-terminus: Cytochrome P450 monooxygenase LUC2 (509 aa).

The helical transmembrane segment at threonine 30–isoleucine 50 threads the bilayer. A heme-binding site is contributed by cysteine 456.

It belongs to the cytochrome P450 family. The cofactor is heme.

It is found in the membrane. It participates in mycotoxin biosynthesis. Functionally, cytochrome P450 monooxygenase; part of the gene cluster that mediates the biosynthesis of the mycotoxin lucilactaene and the lucilactaene-related compound NG-391 that act as cell cycle inhibitors with potent growth inhibitory activity against malarial parasites, moderate growth inhibitory activity against cancer cells, and no activity against bacteria and fungi. Within the pathway, LUC2 performs C-20 methyl group hydroxylation of several intermediates. LUC2 does not perform the full oxidation of the C-20 methyl group into carboxylic acid, which is a prerequisite for the final methylation step. The pathway begins with the hybrid PKS-NRPS synthetase LUC5 which is responsible for the condensation of one acetyl-coenzyme A (CoA) unit with six malonyl-CoA units and the amide linkage of the arising heptaketide and homoserine, subsequently releasing the first intermediate prelucilactaene B. Both the cytochrome P450 monooxygenase LUC2 and the hydrolase LUC6 function in parallel in modification of prelucilactaene B. LUC6 may catalyze the 2-pyrrolidone ring formation to form prelucilactaene C from prelucilactaene B, followed by C-15 hydroxylation by the same enzyme to give prelucilactaene D, which is then converted to prelucilactaene E by epoxidation, and finally to prelucilactaene F by cyclization. Prelucilactane D, prelucilactaene E, and prelucilactaene F can be converted to dihydrolucilactaene, NG391, and lucilactaene, respectively, via C-20 methyl group hydroxylation by the cytochrome P450 monooxygenase LUC2. However, LUC2, unlike FUS8 in fusarin C biosynthesis, is not enough for the full oxidation of the C-20 methyl group into carboxylic acid, which is a prerequisite for the final methylation step. The aldehyde dehydrogenase LUC3 is involved in the biosynthesis by further oxidation of the C-20 alcoholic analog prelucilactaene G into a carboxylic derivative. This unidentified carboxylic derivative may be converted to demethyllucilactaene. As the last step, the methyltransferase LUC1 methylates the hydroxyl group at C-21 of demethyllucilactaene to generate lucilactaene. The protein is Cytochrome P450 monooxygenase LUC2 of Fusarium sp.